A 166-amino-acid chain; its full sequence is Co-chaperone protein HscB homolog (166 aa).

The 73-residue stretch at 3–75 (QYFTLFRIEP…IDRAAYLLKT (73 aa)) folds into the J domain.

The protein belongs to the HscB family. Interacts with HscA and stimulates its ATPase activity.

Co-chaperone involved in the maturation of iron-sulfur cluster-containing proteins. Seems to help targeting proteins to be folded toward HscA. The sequence is that of Co-chaperone protein HscB homolog from Neisseria gonorrhoeae (strain NCCP11945).